The following is a 519-amino-acid chain: Cytochrome P450 monooxygenase AtmP (519 aa).

The chain crosses the membrane as a helical span at residues S21–V41. C457 contributes to the heme binding site.

This sequence belongs to the cytochrome P450 family. The cofactor is heme.

The protein localises to the membrane. It participates in secondary metabolite biosynthesis. Functionally, cytochrome P450 monooxygenase; part of the ATM2 gene cluster that mediates the biosynthesis of aflatrem, a tremorgenic mycotoxin with acute neurotoxic effects. Synthesis of geranylgeranyl diphosphate (GGPP) by AtmG (a GGPP synthase) precedes condensation of GGPP with indole 3-glycerol phosphate, followed by epoxidation and cyclization by AtmM (a FAD-dependent monooxygenase) and AtmC (a prenyltransferase) to produce paspaline. AtmB is also essential for paspaline production, but its exact role has not been identified yet. AtmP, a cytochrome P450 monooxygenase, subsequently converts paspaline to 13-desoxypaxilline via PC-M6 by removal of the C-30 methyl group and oxidation at C-10. AtmQ, a cytochrome P450 monooxygenase, then catalyzes the oxidation of 13-desoxypaxilline, first at C-7 to produce paspalicine and then at C-13 to form paspalinine. Finally, AtmD prenylates paspalinine to form aflatrem. This Aspergillus flavus protein is Cytochrome P450 monooxygenase AtmP.